A 49-amino-acid polypeptide reads, in one-letter code: Zinc-containing ferredoxin (49 aa).

Positions 1–36 are N-terminal extension; that stretch reads GIDPNYRTSRQVVGEHQGHKVYGPVDPPKVLGIHGT. Zn(2+) contacts are provided by His-16 and His-19. Lys-29 carries the N6-methyllysine modification. His-34 lines the Zn(2+) pocket. Residues 37 to 49 form a ferredoxin region; it reads IVXVDFDLCIADG. Cys-45 lines the [3Fe-4S] cluster pocket.

The cofactor is [3Fe-4S] cluster. Requires [4Fe-4S] cluster as cofactor. It depends on Zn(2+) as a cofactor.

Ferredoxins are iron-sulfur proteins that transfer electrons in a wide variety of metabolic reactions. The sequence is that of Zinc-containing ferredoxin (zfx) from Acidianus infernus.